Consider the following 269-residue polypeptide: Tryptophan synthase alpha chain (269 aa).

Catalysis depends on proton acceptor residues Glu-49 and Asp-60.

Belongs to the TrpA family. Tetramer of two alpha and two beta chains.

The catalysed reaction is (1S,2R)-1-C-(indol-3-yl)glycerol 3-phosphate + L-serine = D-glyceraldehyde 3-phosphate + L-tryptophan + H2O. It functions in the pathway amino-acid biosynthesis; L-tryptophan biosynthesis; L-tryptophan from chorismate: step 5/5. Its function is as follows. The alpha subunit is responsible for the aldol cleavage of indoleglycerol phosphate to indole and glyceraldehyde 3-phosphate. The polypeptide is Tryptophan synthase alpha chain (Proteus mirabilis (strain HI4320)).